Consider the following 376-residue polypeptide: Alpha-2,8-sialyltransferase 8E (376 aa).

Residues 1-17 (MRYADPSANRDLLGSRT) lie on the Cytoplasmic side of the membrane. A helical; Signal-anchor for type II membrane protein transmembrane segment spans residues 18–38 (LLFIFICAFALVTLLQQILYG). Topologically, residues 39–376 (RNYIKRYFEF…RVHTGTCSCC (338 aa)) are lumenal. 2 N-linked (GlcNAc...) asparagine glycosylation sites follow: N56 and N96. Intrachain disulfides connect C164-C313 and C178-C373. Substrate-binding positions include N192 and 214–216 (NPS). 2 N-linked (GlcNAc...) asparagine glycosylation sites follow: N241 and N284. 300–302 (STG) contributes to the substrate binding site. H348 functions as the Proton donor/acceptor in the catalytic mechanism.

It belongs to the glycosyltransferase 29 family. As to expression, expressed in fetal and adult brain, adult heart and skeletal muscle. In terms of tissue distribution, expressed in fetal and adult brain, not detected in adult heart and skeletal muscle.

Its subcellular location is the golgi apparatus membrane. The catalysed reaction is a ganglioside GT1b (d18:1(4E)) + CMP-N-acetyl-beta-neuraminate = a ganglioside GQ1b (d18:1(4E)) + CMP + H(+). The enzyme catalyses a ganglioside GD3 (d18:1(4E)) + CMP-N-acetyl-beta-neuraminate = a ganglioside GT3 (d18:1(4E)) + CMP + H(+). It catalyses the reaction a ganglioside GD1a (d18:1(4E)) + CMP-N-acetyl-beta-neuraminate = a ganglioside GT1a (d18:1(4E)) + CMP + H(+). It carries out the reaction a ganglioside GM1b (d18:1(4E)) + CMP-N-acetyl-beta-neuraminate = a ganglioside GD1c (d18:1(4E)) + CMP + H(+). The catalysed reaction is a ganglioside GQ1c (d18:1(4E)) + CMP-N-acetyl-beta-neuraminate = a ganglioside GP1c (d18:1(4E)) + CMP + H(+). The protein operates within protein modification; protein glycosylation. Involved in the synthesis of gangliosides GD1c, GT1a, GQ1b, GP1c and GT3 from GD1a, GT1b, GM1b and GD3 respectively. This is Alpha-2,8-sialyltransferase 8E from Homo sapiens (Human).